Consider the following 194-residue polypeptide: Adenylate kinase isoenzyme 1 (194 aa).

An N-acetylmethionine modification is found at Met-1. 18 to 23 (GSGKGT) contributes to the ATP binding site. Ser-38 bears the Phosphoserine mark. The tract at residues 38-67 (STGDLLRAEVSSGSARGKKLSEIMEKGQLV) is NMP. AMP is bound by residues Thr-39, Arg-44, 65–67 (QLV), 94–97 (GYPR), and Gln-101. The segment at 131 to 141 (KRGETSGRVDD) is LID. Position 132 (Arg-132) interacts with ATP. The AMP site is built by Arg-138 and Arg-149. Residue Gly-177 participates in ATP binding.

It belongs to the adenylate kinase family. AK1 subfamily. Monomer. Mg(2+) serves as cofactor.

It is found in the cytoplasm. The catalysed reaction is a ribonucleoside 5'-phosphate + ATP = a ribonucleoside 5'-diphosphate + ADP. It catalyses the reaction AMP + ATP = 2 ADP. It carries out the reaction dAMP + ATP = dADP + ADP. The enzyme catalyses dATP + AMP = dADP + ADP. The catalysed reaction is dAMP + dATP = 2 dADP. It catalyses the reaction a 2'-deoxyribonucleoside 5'-diphosphate + ATP = a 2'-deoxyribonucleoside 5'-triphosphate + ADP. It carries out the reaction a ribonucleoside 5'-diphosphate + ATP = a ribonucleoside 5'-triphosphate + ADP. The enzyme catalyses CDP + GTP = CTP + GDP. The catalysed reaction is GDP + ATP = GTP + ADP. It catalyses the reaction UDP + ATP = UTP + ADP. It carries out the reaction GTP + UDP = UTP + GDP. The enzyme catalyses dTDP + GTP = dTTP + GDP. The catalysed reaction is dCDP + GTP = dCTP + GDP. It catalyses the reaction dGDP + ATP = dGTP + ADP. It carries out the reaction dADP + GTP = dATP + GDP. The enzyme catalyses thiamine diphosphate + ADP = thiamine triphosphate + AMP. Its function is as follows. Catalyzes the reversible transfer of the terminal phosphate group between ATP and AMP. Also displays broad nucleoside diphosphate kinase activity. Plays an important role in cellular energy homeostasis and in adenine nucleotide metabolism. Also catalyzes at a very low rate the synthesis of thiamine triphosphate (ThTP) from thiamine diphosphate (ThDP) and ADP. The chain is Adenylate kinase isoenzyme 1 from Oryctolagus cuniculus (Rabbit).